The sequence spans 163 residues: Phosphopantetheine adenylyltransferase (163 aa).

A substrate-binding site is contributed by serine 11. ATP is bound by residues 11–12 (SF) and histidine 19. Positions 43, 76, and 90 each coordinate substrate. Residues 91–93 (GLR), glutamate 101, and 126–132 (WQALSSS) each bind ATP.

Belongs to the bacterial CoaD family. As to quaternary structure, homohexamer. Requires Mg(2+) as cofactor.

It localises to the cytoplasm. The catalysed reaction is (R)-4'-phosphopantetheine + ATP + H(+) = 3'-dephospho-CoA + diphosphate. The protein operates within cofactor biosynthesis; coenzyme A biosynthesis; CoA from (R)-pantothenate: step 4/5. Reversibly transfers an adenylyl group from ATP to 4'-phosphopantetheine, yielding dephospho-CoA (dPCoA) and pyrophosphate. The protein is Phosphopantetheine adenylyltransferase of Streptococcus pyogenes serotype M2 (strain MGAS10270).